Consider the following 355-residue polypeptide: UDP-glucose 4-epimerase uge1 (355 aa).

8–39 (TVLVTGGAGYIGSHTCVVLLEKGYDVVIVDNL) is an NAD(+) binding site.

The protein belongs to the NAD(P)-dependent epimerase/dehydratase family. It depends on NAD(+) as a cofactor.

It catalyses the reaction UDP-alpha-D-glucose = UDP-alpha-D-galactose. It participates in carbohydrate metabolism; galactose metabolism. Its function is as follows. Major UDP-glucose/-galactose 4-epimerase under glucose-rich conditions involved in protein galactosylation. The chain is UDP-glucose 4-epimerase uge1 (uge1) from Schizosaccharomyces pombe (strain 972 / ATCC 24843) (Fission yeast).